Reading from the N-terminus, the 414-residue chain is Alanine--glyoxylate aminotransferase (414 aa).

A mitochondrion-targeting transit peptide spans 1 to 23 (MFRMLAKASVTLGSRAASWVRNM). Lys-231 is modified (N6-(pyridoxal phosphate)lysine). Lys-247 carries the post-translational modification N6-acetyllysine; alternate. At Lys-247 the chain carries N6-succinyllysine; alternate. An N6-acetyllysine mark is found at Lys-256 and Lys-334. Arg-382 contributes to the substrate binding site. Positions 412–414 (NKL) match the Microbody targeting signal motif.

It belongs to the class-V pyridoxal-phosphate-dependent aminotransferase family. In terms of assembly, homodimer. The cofactor is pyridoxal 5'-phosphate.

The protein localises to the peroxisome. It localises to the mitochondrion matrix. It catalyses the reaction L-serine + pyruvate = 3-hydroxypyruvate + L-alanine. The enzyme catalyses glyoxylate + L-alanine = glycine + pyruvate. In terms of biological role, catalyzes the transamination of glyoxylate to glycine and contributes to the glyoxylate detoxification. Catalyzes the transamination between L-serine and pyruvate and weakly contributes to gluconeogenesis from the L-serine metabolism. This is Alanine--glyoxylate aminotransferase from Rattus norvegicus (Rat).